Here is a 346-residue protein sequence, read N- to C-terminus: NADH-ubiquinone oxidoreductase chain 2 (346 aa).

11 helical membrane-spanning segments follow: residues 1-21 (MNPH…TITI), 25-45 (HWVL…PLIS), 60-80 (FLTQ…NAWA), 95-115 (CLLL…HFWF), 124-144 (LMTA…LLLM), 149-169 (LNPA…GWMG), 178-195 (ILAF…IILV), 200-219 (LALL…FMAL), 242-262 (ATLM…GFMP), 274-294 (EMTP…FFYL), and 326-346 (AILA…HAIV).

This sequence belongs to the complex I subunit 2 family.

Its subcellular location is the mitochondrion inner membrane. The enzyme catalyses a ubiquinone + NADH + 5 H(+)(in) = a ubiquinol + NAD(+) + 4 H(+)(out). Core subunit of the mitochondrial membrane respiratory chain NADH dehydrogenase (Complex I) that is believed to belong to the minimal assembly required for catalysis. Complex I functions in the transfer of electrons from NADH to the respiratory chain. The immediate electron acceptor for the enzyme is believed to be ubiquinone. The polypeptide is NADH-ubiquinone oxidoreductase chain 2 (MT-ND2) (Mareca falcata (Falcated duck)).